Here is a 382-residue protein sequence, read N- to C-terminus: 3-dehydroquinate synthase (382 aa).

Residues 115–119, 139–140, Lys-152, and Lys-161 contribute to the NAD(+) site; these read GVVGD and TS. Residues Glu-194, His-256, and His-274 each contribute to the Zn(2+) site.

Belongs to the sugar phosphate cyclases superfamily. Dehydroquinate synthase family. Co(2+) serves as cofactor. It depends on Zn(2+) as a cofactor. Requires NAD(+) as cofactor.

Its subcellular location is the cytoplasm. It carries out the reaction 7-phospho-2-dehydro-3-deoxy-D-arabino-heptonate = 3-dehydroquinate + phosphate. Its pathway is metabolic intermediate biosynthesis; chorismate biosynthesis; chorismate from D-erythrose 4-phosphate and phosphoenolpyruvate: step 2/7. Functionally, catalyzes the conversion of 3-deoxy-D-arabino-heptulosonate 7-phosphate (DAHP) to dehydroquinate (DHQ). The protein is 3-dehydroquinate synthase of Rhodopseudomonas palustris (strain BisB18).